Reading from the N-terminus, the 166-residue chain is NAD(P)H-quinone oxidoreductase subunit I, chloroplastic (166 aa).

4Fe-4S ferredoxin-type domains lie at 55 to 84 (GRIH…VDWK) and 95 to 124 (LNYS…MTEE). Cys64, Cys67, Cys70, Cys74, Cys104, Cys107, Cys110, and Cys114 together coordinate [4Fe-4S] cluster.

This sequence belongs to the complex I 23 kDa subunit family. As to quaternary structure, NDH is composed of at least 16 different subunits, 5 of which are encoded in the nucleus. It depends on [4Fe-4S] cluster as a cofactor.

The protein resides in the plastid. Its subcellular location is the chloroplast thylakoid membrane. It catalyses the reaction a plastoquinone + NADH + (n+1) H(+)(in) = a plastoquinol + NAD(+) + n H(+)(out). It carries out the reaction a plastoquinone + NADPH + (n+1) H(+)(in) = a plastoquinol + NADP(+) + n H(+)(out). Functionally, NDH shuttles electrons from NAD(P)H:plastoquinone, via FMN and iron-sulfur (Fe-S) centers, to quinones in the photosynthetic chain and possibly in a chloroplast respiratory chain. The immediate electron acceptor for the enzyme in this species is believed to be plastoquinone. Couples the redox reaction to proton translocation, and thus conserves the redox energy in a proton gradient. In Bahiopsis tomentosa (Tecote), this protein is NAD(P)H-quinone oxidoreductase subunit I, chloroplastic.